A 432-amino-acid polypeptide reads, in one-letter code: Cysteine desulfurase, mitosomal (432 aa).

Pyridoxal 5'-phosphate contacts are provided by residues 102–103 (AT), Q212, and 232–234 (CAH). Residue K235 is modified to N6-(pyridoxal phosphate)lysine. T272 contacts pyridoxal 5'-phosphate. C357 acts as the Cysteine persulfide intermediate in catalysis. C357 contributes to the [2Fe-2S] cluster binding site.

The protein belongs to the class-V pyridoxal-phosphate-dependent aminotransferase family. NifS/IscS subfamily. It depends on pyridoxal 5'-phosphate as a cofactor.

The protein localises to the mitosome. It carries out the reaction (sulfur carrier)-H + L-cysteine = (sulfur carrier)-SH + L-alanine. In terms of biological role, catalyzes the removal of elemental sulfur from cysteine to produce alanine. It supplies the inorganic sulfur for iron-sulfur (Fe-S) clusters in mitosomes. The sequence is that of Cysteine desulfurase, mitosomal from Encephalitozoon cuniculi (strain GB-M1) (Microsporidian parasite).